Here is a 210-residue protein sequence, read N- to C-terminus: Probable peroxygenase 7 (210 aa).

Positions 1–24 (MSHQTVALASKAKSPKPKRGKLDK) are disordered. An EF-hand domain is found at 25–60 (EKMTALEKHVSFFDRNKDGTVYPWETYQGFRALGTG). His33 is a binding site for heme. The Ca(2+) site is built by Asp38, Asn40, Asp42, Thr44, and Glu49. Positions 81–90 (PGKGFSPLFP) match the Proline-knot motif. Phosphoserine is present on Ser188.

The protein belongs to the caleosin family. Homodimer. The cofactor is heme b. Ca(2+) is required as a cofactor. Expressed in pollen coat.

Its subcellular location is the secreted. The catalysed reaction is RH + ROOH = ROH + ROH.. Probable calcium-binding peroxygenase. May be involved in pollination. The protein is Probable peroxygenase 7 (PXG7) of Arabidopsis thaliana (Mouse-ear cress).